We begin with the raw amino-acid sequence, 311 residues long: ATP synthase subunit gamma, mitochondrial (311 aa).

The N-terminal 33 residues, 1 to 33 (MLSRIVSNNATRSVMCHQAQVGILYKTNPVRTY), are a transit peptide targeting the mitochondrion.

It belongs to the ATPase gamma chain family. As to quaternary structure, F-type ATPases have 2 components, CF(1) - the catalytic core - and CF(0) - the membrane proton channel. CF(1) has five subunits: alpha(3), beta(3), gamma(1), delta(1), epsilon(1). CF(0) has three main subunits: a, b and c.

The protein localises to the mitochondrion. Its subcellular location is the mitochondrion inner membrane. Mitochondrial membrane ATP synthase (F(1)F(0) ATP synthase or Complex V) produces ATP from ADP in the presence of a proton gradient across the membrane which is generated by electron transport complexes of the respiratory chain. F-type ATPases consist of two structural domains, F(1) - containing the extramembraneous catalytic core, and F(0) - containing the membrane proton channel, linked together by a central stalk and a peripheral stalk. During catalysis, ATP synthesis in the catalytic domain of F(1) is coupled via a rotary mechanism of the central stalk subunits to proton translocation. Part of the complex F(1) domain and the central stalk which is part of the complex rotary element. The gamma subunit protrudes into the catalytic domain formed of alpha(3)beta(3). Rotation of the central stalk against the surrounding alpha(3)beta(3) subunits leads to hydrolysis of ATP in three separate catalytic sites on the beta subunits. In Saccharomyces cerevisiae (strain ATCC 204508 / S288c) (Baker's yeast), this protein is ATP synthase subunit gamma, mitochondrial (ATP3).